The following is a 483-amino-acid chain: Probable glycine dehydrogenase (decarboxylating) subunit 2 (483 aa).

Lys267 carries the post-translational modification N6-(pyridoxal phosphate)lysine.

This sequence belongs to the GcvP family. C-terminal subunit subfamily. As to quaternary structure, the glycine cleavage system is composed of four proteins: P, T, L and H. In this organism, the P 'protein' is a heterodimer of two subunits. The cofactor is pyridoxal 5'-phosphate.

The enzyme catalyses N(6)-[(R)-lipoyl]-L-lysyl-[glycine-cleavage complex H protein] + glycine + H(+) = N(6)-[(R)-S(8)-aminomethyldihydrolipoyl]-L-lysyl-[glycine-cleavage complex H protein] + CO2. Its function is as follows. The glycine cleavage system catalyzes the degradation of glycine. The P protein binds the alpha-amino group of glycine through its pyridoxal phosphate cofactor; CO(2) is released and the remaining methylamine moiety is then transferred to the lipoamide cofactor of the H protein. The polypeptide is Probable glycine dehydrogenase (decarboxylating) subunit 2 (Kosmotoga olearia (strain ATCC BAA-1733 / DSM 21960 / TBF 19.5.1)).